Reading from the N-terminus, the 520-residue chain is Cytochrome P450 monooxygenase 98 (520 aa).

The chain crosses the membrane as a helical span at residues Met-7–Leu-27. Heme is bound at residue Cys-445.

Belongs to the cytochrome P450 family. It depends on heme as a cofactor.

It localises to the membrane. The protein operates within secondary metabolite biosynthesis. Functionally, cytochrome P450 monooxygenase that is able to use pyrene, phenanthrene, 3,5-dimethoxy-trans-stilbene and 3,5,4'-trimethoxy-trans-stilbene as substrates for oxidation. The polypeptide is Cytochrome P450 monooxygenase 98 (Postia placenta (strain ATCC 44394 / Madison 698-R) (Brown rot fungus)).